The sequence spans 4870 residues: Malformin synthetase mlfA (4870 aa).

The tract at residues 106-497 (ERRAANRPHS…CGRADTQVKL (392 aa)) is adenylation 1. The Carrier 1 domain maps to 635 to 711 (LGLSQLEQEI…EASSLAEVQE (77 aa)). At S672 the chain carries O-(pantetheine 4'-phosphoryl)serine. The tract at residues 749-1133 (EDVFPCTTMQ…ALNTLTLLQA (385 aa)) is condensation 1. The adenylation 2 stretch occupies residues 1161 to 1550 (DRWVTRQPES…GRKDTQVKLR (390 aa)). A Carrier 2 domain is found at 1688–1765 (TASSKLELTL…QLAAILGEAT (78 aa)). O-(pantetheine 4'-phosphoryl)serine is present on S1725. Disordered stretches follow at residues 1764 to 1794 (ATGQPESSASSTTEEGFTFSTPDDSSTNDGV) and 1829 to 1859 (GSSSCKTPSVSSSSSSSSSRKKKSAKVVSPV). 2 stretches are compositionally biased toward low complexity: residues 1769-1792 (ESSASSTTEEGFTFSTPDDSSTND) and 1830-1846 (SSSCKTPSVSSSSSSSS). The condensation 2 stretch occupies residues 1898–2313 (EDIYPATALQ…GVSYRDKQTL (416 aa)). The segment at 2336–2728 (VRTPHAPAVF…IGRRDGQLKL (393 aa)) is adenylation 3. Positions 2864–2940 (RPATAQEREM…QLMRHLSANG (77 aa)) constitute a Carrier 3 domain. At S2901 the chain carries O-(pantetheine 4'-phosphoryl)serine. Condensation regions lie at residues 2957-3422 (WVPL…TYDQ) and 3443-3862 (DIYP…EQLV). An adenylation 4 region spans residues 3887–4277 (HSSREAACAW…VGRKDNQIKF (391 aa)). Residues 4411–4487 (MPFTAAECKM…DLAYRTANLV (77 aa)) enclose the Carrier 4 domain. S4448 carries the O-(pantetheine 4'-phosphoryl)serine modification. Residues 4524 to 4837 (EVLPTTSFQR…LQTIVQHQNN (314 aa)) are condensation 5.

The protein belongs to the NRP synthetase family.

Its pathway is secondary metabolite biosynthesis. Functionally, nonribosomal peptide synthetase; part of the gene cluster that mediates the biosynthesis of malformins, cyclic pentapeptides with a disulfide bond between 2 consecutive cysteins, that show potential anti-tumor as well as antimalarial and antitrypanosomal properties. The nonribosomal peptide synthetase mlfA is responsible of the formation of the cyclic pentapeptide. The malformin biosynthesis clusters in malformin-producing fungi also contain enzymes involved in the formation of the disulfide bond between the two consecutive cysteins within malformins, in addition to additional tailoring enzymes such as methyltransferases or oxidoreductases. They are also composed of up to 4 major facilitator superfamily transporters, and transcription factors probably involved in the regulation of the expression of those clusters. The chain is Malformin synthetase mlfA from Aspergillus niger (strain ATCC 1015 / CBS 113.46 / FGSC A1144 / LSHB Ac4 / NCTC 3858a / NRRL 328 / USDA 3528.7).